Here is a 294-residue protein sequence, read N- to C-terminus: NADH-cytochrome b5 reductase 1 (294 aa).

The chain crosses the membrane as a helical span at residues 13–33; that stretch reads PHASFLGGLVVAAILGLFIFF. One can recognise an FAD-binding FR-type domain in the interval 44-147; sequence VEWRSFKLVD…KGPKGKFVYT (104 aa). FAD contacts are provided by residues 127-142 and 153-185; these read SLLT…GPKG and HLVM…RLSL.

Belongs to the flavoprotein pyridine nucleotide cytochrome reductase family. Monomer. Component of the 2-(3-amino-3-carboxypropyl)histidine synthase complex composed of DPH1, DPH2, DPH3 and a NADH-dependent reductase, predominantly CBR1. FAD is required as a cofactor.

The protein resides in the mitochondrion outer membrane. The enzyme catalyses 2 Fe(III)-[cytochrome b5] + NADH = 2 Fe(II)-[cytochrome b5] + NAD(+) + H(+). The catalysed reaction is 2 Fe(3+)-[Dph3] + NADH = 2 Fe(2+)-[Dph3] + NAD(+) + H(+). The protein operates within protein modification; peptidyl-diphthamide biosynthesis. Functionally, NADH-dependent reductase for DPH3 and cytochrome b5. Required for the first step of diphthamide biosynthesis, a post-translational modification of histidine which occurs in elongation factor 2. DPH1 and DPH2 transfer a 3-amino-3-carboxypropyl (ACP) group from S-adenosyl-L-methionine (SAM) to a histidine residue, the reaction is assisted by a reduction system comprising DPH3 and a NADH-dependent reductase, predominantly CBR1. By reducing DPH3, also involved in the formation of the tRNA wobble base modification mcm5s 2U (5-methoxycarbonylmethyl-2-thiouridine), mediated by the elongator complex. The cytochrome b5/NADH cytochrome b5 reductase electron transfer system supports the catalytic activity of several sterol biosynthetic enzymes. The polypeptide is NADH-cytochrome b5 reductase 1 (CBR1) (Cryptococcus neoformans var. neoformans serotype D (strain B-3501A) (Filobasidiella neoformans)).